Here is a 535-residue protein sequence, read N- to C-terminus: Probable histone-arginine methyltransferase 1.3 (535 aa).

Residue M1 is modified to N-acetylmethionine. An SAM-dependent MTase PRMT-type domain is found at 141–456 (EASSAKMYFH…QSYTIDLTLS (316 aa)). The S-adenosyl-L-methionine site is built by Q158, R167, G191, E213, and E243. Residues E257 and E266 contribute to the active site. An S-adenosyl-L-methionine-binding site is contributed by S271. The segment at 494–517 (VAQEPPLQPQPELSTQQDIQTPND) is disordered. Polar residues predominate over residues 507-516 (STQQDIQTPN).

Belongs to the class I-like SAM-binding methyltransferase superfamily. Protein arginine N-methyltransferase family. In terms of assembly, interacts with PQT3 in the nucleus. Ubiquitinated by PQT3.

Its subcellular location is the nucleus. It is found in the cytoplasm. The catalysed reaction is L-arginyl-[protein] + 2 S-adenosyl-L-methionine = N(omega),N(omega)-dimethyl-L-arginyl-[protein] + 2 S-adenosyl-L-homocysteine + 2 H(+). Functionally, methylates (mono- and asymmetric dimethylation) the guanidino nitrogens of arginyl residues in several proteins involved in DNA packaging, transcription regulation, and mRNA stability. Recruited to promoters upon gene activation, methylates histone H3 and activates transcription via chromatin remodeling. Positive regulator in the oxidative stress tolerance that promotes the expression of enzymes preventing oxidative stress such as APX1 and GPX1 by histone methylation (H3R17me2a). Confers tolerance to cadmium CdCl(2) and salt NaCl stresses. This Arabidopsis thaliana (Mouse-ear cress) protein is Probable histone-arginine methyltransferase 1.3 (PRMT13).